The sequence spans 128 residues: Holo-[acyl-carrier-protein] synthase (128 aa).

Residues D8 and E59 each contribute to the Mg(2+) site.

It belongs to the P-Pant transferase superfamily. AcpS family. It depends on Mg(2+) as a cofactor.

The protein localises to the cytoplasm. It carries out the reaction apo-[ACP] + CoA = holo-[ACP] + adenosine 3',5'-bisphosphate + H(+). Its function is as follows. Transfers the 4'-phosphopantetheine moiety from coenzyme A to a Ser of acyl-carrier-protein. This chain is Holo-[acyl-carrier-protein] synthase, found in Rickettsia typhi (strain ATCC VR-144 / Wilmington).